Here is a 322-residue protein sequence, read N- to C-terminus: Atrochrysone carboxyl ACP thioesterase nsrC (322 aa).

Residues His105, His107, Asp109, and His110 each coordinate Zn(2+). Catalysis depends on Asp109, which acts as the Proton donor/acceptor.

Belongs to the metallo-beta-lactamase superfamily. The cofactor is Zn(2+).

It catalyses the reaction atrochrysone carboxyl-[ACP] + H2O = atrochrysone carboxylate + holo-[ACP] + H(+). It participates in secondary metabolite biosynthesis. Functionally, atrochrysone carboxyl ACP thioesterase; part of the gene cluster that mediates the biosynthesis of the tetrahydroxanthone dimer neosartorin, which exhibits antibacterial activity. The two different monomeric units appear to be synthesized by the same set of enzymes, among which the Baeyer-Villiger monooxygenase nsrF is the key enzyme for the divergence of the biosynthetic routes. The pathway begins with the synthesis of atrochrysone thioester by the polyketide synthase nsrB. The atrochrysone carboxyl ACP thioesterase nsrC then breaks the thioester bond and releases the atrochrysone carboxylic acid from AacuL. Atrochrysone carboxylic acid is decarboxylated by the decarboxylase nsrE, and oxidized by the anthrone oxygenase nsrD to yield emodin. Emodin is then reduced to emodin hydroquinone by the oxidoreductase nsrR. A-ring reduction by the short chain dehydrogenase nsrJ, dehydration by the scytalone dehydratase-like protein nsrI and probable spontaneous re-oxidation, results in overall deoxygenation to chrysophanol. The Baeyer-Villiger monooxygenase nsrF accepts chrysophanol as a substrate to insert one oxygen atom at two different positions to yield the precursors of both monomric units. NsrF is promiscuous/flexible in interacting with the 2 (non methylated and methylated) aromatic rings of chrysophanol, thus diverging the biosynthetic pathway at this point. After the hydrolysis of the lactones, methylesterification by the methyltransferase nsrG yields respectively moniliphenone and 2,2',6'-trihydroxy-4-methyl-6-methoxya-cyldiphenylmethanone. The next steps are the hydroxylation by the FAD-dependent monooxygenase nsrK, followed by isomerization by the monooxygenase nsrQ. The short chain dehydrogenase/reductase nsrO then catalyzes the C-5 ketoreduction to give the xanthone skeleton of blennolide C and 5-acetylblennolide A. The acetyltransferase nsrL has a strict substrate specificity and uses only blennolide A but not blennolide C to yield 5-acetylblennolide A as the single-acetylated product. In the final step of the biosynthesis, the heterodimerization of the 2 xanthones, blennolide C and 5-acetylblennolide A, is catalyzed by the cytochrome P450 monooxygenase nsrP. NsrP can utilize at least three different xanthones as its substrates to perform the dimerization reaction. The chain is Atrochrysone carboxyl ACP thioesterase nsrC from Aspergillus novofumigatus (strain IBT 16806).